Reading from the N-terminus, the 189-residue chain is Ribosome hibernation promotion factor (189 aa).

This sequence belongs to the HPF/YfiA ribosome-associated protein family. Long HPF subfamily. Interacts with 100S ribosomes. Not associated with 70S ribosome monomers, about 1 monomer per ribosome.

Its subcellular location is the cytoplasm. Its function is as follows. Required for dimerization of active 70S ribosomes into 100S ribosomes in stationary phase; 100S ribosomes are translationally inactive and sometimes present during exponential growth. May not be the only factor implicated. Might negatively regulate the activity of the sigma-54 factor (SigL). The sequence is that of Ribosome hibernation promotion factor (yvyD) from Bacillus subtilis (strain 168).